Consider the following 172-residue polypeptide: 3-hydroxydecanoyl-[acyl-carrier-protein] dehydratase (172 aa).

Residue H71 is part of the active site.

Belongs to the thioester dehydratase family. FabA subfamily. In terms of assembly, homodimer.

It localises to the cytoplasm. The catalysed reaction is a (3R)-hydroxyacyl-[ACP] = a (2E)-enoyl-[ACP] + H2O. It carries out the reaction (3R)-hydroxydecanoyl-[ACP] = (2E)-decenoyl-[ACP] + H2O. It catalyses the reaction (2E)-decenoyl-[ACP] = (3Z)-decenoyl-[ACP]. It functions in the pathway lipid metabolism; fatty acid biosynthesis. In terms of biological role, necessary for the introduction of cis unsaturation into fatty acids. Catalyzes the dehydration of (3R)-3-hydroxydecanoyl-ACP to E-(2)-decenoyl-ACP and then its isomerization to Z-(3)-decenoyl-ACP. Can catalyze the dehydratase reaction for beta-hydroxyacyl-ACPs with saturated chain lengths up to 16:0, being most active on intermediate chain length. This chain is 3-hydroxydecanoyl-[acyl-carrier-protein] dehydratase, found in Blochmanniella pennsylvanica (strain BPEN).